The sequence spans 311 residues: Porphobilinogen deaminase (311 aa).

Position 242 is an S-(dipyrrolylmethanemethyl)cysteine (Cys242).

This sequence belongs to the HMBS family. As to quaternary structure, monomer. Requires dipyrromethane as cofactor.

The catalysed reaction is 4 porphobilinogen + H2O = hydroxymethylbilane + 4 NH4(+). It functions in the pathway porphyrin-containing compound metabolism; protoporphyrin-IX biosynthesis; coproporphyrinogen-III from 5-aminolevulinate: step 2/4. Its function is as follows. Tetrapolymerization of the monopyrrole PBG into the hydroxymethylbilane pre-uroporphyrinogen in several discrete steps. This chain is Porphobilinogen deaminase, found in Hahella chejuensis (strain KCTC 2396).